Here is a 365-residue protein sequence, read N- to C-terminus: DNA replication and repair protein RecF (365 aa).

30-37 (GDNGEGKT) lines the ATP pocket.

The protein belongs to the RecF family.

It is found in the cytoplasm. Functionally, the RecF protein is involved in DNA metabolism; it is required for DNA replication and normal SOS inducibility. RecF binds preferentially to single-stranded, linear DNA. It also seems to bind ATP. In Leptospira interrogans serogroup Icterohaemorrhagiae serovar copenhageni (strain Fiocruz L1-130), this protein is DNA replication and repair protein RecF.